The primary structure comprises 217 residues: MHDQIIPCGMLVAIEGIDGAGKTTLARSLALKLRGVGLETVVSKEPTNGPWGTLLRQSAATGRFSPEEEVDVLLRDRRQHVEDLIVPMIGRGAVVILDRYFPSMVAYQGAAGLPVDALLEANAFAPRPDVLLLLDVPPAIGLQRIWERGSTPNHFETTENLSRCRDIFLALELPSKRVIDATANAETVFSAALGLVMEVLRVRLGALGAVVLERLAG.

16–23 (GIDGAGKT) is an ATP binding site.

Belongs to the thymidylate kinase family.

It catalyses the reaction dTMP + ATP = dTDP + ADP. In terms of biological role, phosphorylation of dTMP to form dTDP in both de novo and salvage pathways of dTTP synthesis. The sequence is that of Thymidylate kinase from Xylella fastidiosa (strain M12).